We begin with the raw amino-acid sequence, 327 residues long: Phenylalanine--tRNA ligase alpha subunit (327 aa).

Residue E252 coordinates Mg(2+).

The protein belongs to the class-II aminoacyl-tRNA synthetase family. Phe-tRNA synthetase alpha subunit type 1 subfamily. Tetramer of two alpha and two beta subunits. The cofactor is Mg(2+).

The protein localises to the cytoplasm. The catalysed reaction is tRNA(Phe) + L-phenylalanine + ATP = L-phenylalanyl-tRNA(Phe) + AMP + diphosphate + H(+). The chain is Phenylalanine--tRNA ligase alpha subunit from Klebsiella pneumoniae subsp. pneumoniae (strain ATCC 700721 / MGH 78578).